A 379-amino-acid polypeptide reads, in one-letter code: Histidinol-phosphate aminotransferase (379 aa).

At Lys-231 the chain carries N6-(pyridoxal phosphate)lysine.

It belongs to the class-II pyridoxal-phosphate-dependent aminotransferase family. Histidinol-phosphate aminotransferase subfamily. In terms of assembly, homodimer. The cofactor is pyridoxal 5'-phosphate.

It carries out the reaction L-histidinol phosphate + 2-oxoglutarate = 3-(imidazol-4-yl)-2-oxopropyl phosphate + L-glutamate. Its pathway is amino-acid biosynthesis; L-histidine biosynthesis; L-histidine from 5-phospho-alpha-D-ribose 1-diphosphate: step 7/9. This chain is Histidinol-phosphate aminotransferase, found in Mycolicibacterium smegmatis (strain ATCC 700084 / mc(2)155) (Mycobacterium smegmatis).